The chain runs to 295 residues: Glutamyl-Q tRNA(Asp) synthetase (295 aa).

L-glutamate-binding positions include 5–9 (RFAPS) and glutamate 41. A 'HIGH' region motif is present at residues 8–18 (PSPTGLLHIGS). The Zn(2+) site is built by cysteine 97, cysteine 99, tyrosine 117, and cysteine 121. Residues tyrosine 178 and arginine 196 each contribute to the L-glutamate site. Residues 234-238 (KWSKQ) carry the 'KMSKS' region motif. Position 237 (lysine 237) interacts with ATP.

Belongs to the class-I aminoacyl-tRNA synthetase family. GluQ subfamily. Requires Zn(2+) as cofactor.

Functionally, catalyzes the tRNA-independent activation of glutamate in presence of ATP and the subsequent transfer of glutamate onto a tRNA(Asp). Glutamate is transferred on the 2-amino-5-(4,5-dihydroxy-2-cyclopenten-1-yl) moiety of the queuosine in the wobble position of the QUC anticodon. The sequence is that of Glutamyl-Q tRNA(Asp) synthetase from Neisseria meningitidis serogroup B (strain ATCC BAA-335 / MC58).